An 859-amino-acid chain; its full sequence is Leucine--tRNA ligase (859 aa).

Residues Pro42–His52 carry the 'HIGH' region motif. A 'KMSKS' region motif is present at residues Lys618 to Ser622. Lys621 provides a ligand contact to ATP.

The protein belongs to the class-I aminoacyl-tRNA synthetase family.

The protein localises to the cytoplasm. It catalyses the reaction tRNA(Leu) + L-leucine + ATP = L-leucyl-tRNA(Leu) + AMP + diphosphate. The chain is Leucine--tRNA ligase from Shewanella putrefaciens (strain CN-32 / ATCC BAA-453).